We begin with the raw amino-acid sequence, 125 residues long: Translation initiation factor 5A (125 aa).

The residue at position 35 (Lys-35) is a Hypusine.

The protein belongs to the eIF-5A family.

Its subcellular location is the cytoplasm. Functions by promoting the formation of the first peptide bond. The chain is Translation initiation factor 5A (eIF5A) from Methanosphaerula palustris (strain ATCC BAA-1556 / DSM 19958 / E1-9c).